The chain runs to 34 residues: Antimicrobial peptide Alo-2 (34 aa).

Intrachain disulfides connect C1/C18, C8/C22, and C17/C33.

It is found in the secreted. Has antifungal activity against C.glabrata. The chain is Antimicrobial peptide Alo-2 from Acrocinus longimanus (Giant harlequin beetle).